Consider the following 776-residue polypeptide: General transcription and DNA repair factor IIH helicase subunit XPD (776 aa).

Positions 7 to 277 (DLLVYFPYSY…KKVDEKRLKD (271 aa)) constitute a Helicase ATP-binding domain. 42-49 (MPSGTGKT) contacts ATP. Cys-115, Cys-133, Cys-150, and Cys-184 together coordinate [4Fe-4S] cluster. Positions 228 to 231 (DEAH) match the DEAH box motif. A disordered region spans residues 736–776 (HVEKQSTSKPPQQQNSAINSTITTSTTTTTTTSTISETHLT). A compositionally biased stretch (polar residues) spans 742–754 (TSKPPQQQNSAIN). Over residues 755-776 (STITTSTTTTTTTSTISETHLT) the composition is skewed to low complexity.

This sequence belongs to the helicase family. RAD3/XPD subfamily. In terms of assembly, component of the 7-subunit TFIIH core complex composed of XPB/repB, XPD/repD, gtf2h1, gtf2h2, gtf2h3, gtf2h4 and gtf2h5, which is active in NER. The core complex associates with the 3-subunit CDK-activating kinase (CAK) module composed of cycH/cyclin H, cdk7 and mnat1 to form the 10-subunit holoenzyme (holo-TFIIH) active in transcription. It depends on Mg(2+) as a cofactor. [4Fe-4S] cluster is required as a cofactor.

Its subcellular location is the nucleus. The catalysed reaction is Couples ATP hydrolysis with the unwinding of duplex DNA at the replication fork by translocating in the 5'-3' direction. This creates two antiparallel DNA single strands (ssDNA). The leading ssDNA polymer is the template for DNA polymerase III holoenzyme which synthesizes a continuous strand.. The enzyme catalyses ATP + H2O = ADP + phosphate + H(+). ATP-dependent 5'-3' DNA helicase, component of the general transcription and DNA repair factor IIH (TFIIH) core complex, which is involved in general and transcription-coupled nucleotide excision repair (NER) of damaged DNA and, when complexed to CDK-activating kinase (CAK), in transcription by RNA polymerase II. In NER, TFIIH acts by opening DNA around the lesion to allow the excision of the damaged oligonucleotide and its replacement by a new DNA fragment. The ATP-dependent helicase activity of XPD/repD is required for DNA opening. In transcription, TFIIH has an essential role in transcription initiation. When the pre-initiation complex (PIC) has been established, TFIIH is required for promoter opening and promoter escape. Phosphorylation of the C-terminal tail (CTD) of the largest subunit of RNA polymerase II by the kinase module CAK controls the initiation of transcription. XPD/repD acts by forming a bridge between CAK and the core-TFIIH complex. The chain is General transcription and DNA repair factor IIH helicase subunit XPD from Dictyostelium discoideum (Social amoeba).